The following is an 84-amino-acid chain: Cell division topological specificity factor (84 aa).

Belongs to the MinE family.

Functionally, prevents the cell division inhibition by proteins MinC and MinD at internal division sites while permitting inhibition at polar sites. This ensures cell division at the proper site by restricting the formation of a division septum at the midpoint of the long axis of the cell. The polypeptide is Cell division topological specificity factor (Desulfotalea psychrophila (strain LSv54 / DSM 12343)).